The following is a 206-amino-acid chain: Large ribosomal subunit protein uL4 (206 aa).

The tract at residues 46-77 is disordered; it reads GTRAQKDREQVRHSTKKPFKQKGTGNARAGMT.

This sequence belongs to the universal ribosomal protein uL4 family. As to quaternary structure, part of the 50S ribosomal subunit.

Functionally, one of the primary rRNA binding proteins, this protein initially binds near the 5'-end of the 23S rRNA. It is important during the early stages of 50S assembly. It makes multiple contacts with different domains of the 23S rRNA in the assembled 50S subunit and ribosome. In terms of biological role, forms part of the polypeptide exit tunnel. This Paracidovorax citrulli (strain AAC00-1) (Acidovorax citrulli) protein is Large ribosomal subunit protein uL4.